Reading from the N-terminus, the 168-residue chain is Photosystem I assembly protein Ycf3 (168 aa).

TPR repeat units follow at residues 35-68, 72-105, and 120-153; these read AFTY…EIDP, SYIL…NPFL, and GEQA…TPGN.

This sequence belongs to the Ycf3 family.

The protein resides in the plastid. It is found in the chloroplast thylakoid membrane. Essential for the assembly of the photosystem I (PSI) complex. May act as a chaperone-like factor to guide the assembly of the PSI subunits. In Helianthus annuus (Common sunflower), this protein is Photosystem I assembly protein Ycf3.